The following is a 388-amino-acid chain: Arginine biosynthesis bifunctional protein ArgJ 2 (388 aa).

Residues T145, K167, T178, E257, and N381 each coordinate substrate. T178 serves as the catalytic Nucleophile.

This sequence belongs to the ArgJ family. In terms of assembly, heterotetramer of two alpha and two beta chains.

It is found in the cytoplasm. The catalysed reaction is N(2)-acetyl-L-ornithine + L-glutamate = N-acetyl-L-glutamate + L-ornithine. The enzyme catalyses L-glutamate + acetyl-CoA = N-acetyl-L-glutamate + CoA + H(+). It functions in the pathway amino-acid biosynthesis; L-arginine biosynthesis; L-ornithine and N-acetyl-L-glutamate from L-glutamate and N(2)-acetyl-L-ornithine (cyclic): step 1/1. The protein operates within amino-acid biosynthesis; L-arginine biosynthesis; N(2)-acetyl-L-ornithine from L-glutamate: step 1/4. Catalyzes two activities which are involved in the cyclic version of arginine biosynthesis: the synthesis of N-acetylglutamate from glutamate and acetyl-CoA as the acetyl donor, and of ornithine by transacetylation between N(2)-acetylornithine and glutamate. This is Arginine biosynthesis bifunctional protein ArgJ 2 from Clostridium acetobutylicum (strain ATCC 824 / DSM 792 / JCM 1419 / IAM 19013 / LMG 5710 / NBRC 13948 / NRRL B-527 / VKM B-1787 / 2291 / W).